Reading from the N-terminus, the 237-residue chain is Mitochondrial carrier-like protein L276 (237 aa).

3 Solcar repeats span residues 1-83, 85-161, and 164-233; these read MAKY…FENK, YPYT…LNEY, and KPVV…LNKK. Transmembrane regions (helical) follow at residues 11 to 27, 60 to 76, 91 to 108, 140 to 160, and 166 to 183; these read AIAT…ICTF, VPAI…KYFL, MING…THPI, SFGK…TLNE, and VVSS…MQPL. A Substrate recognition motif is present at residues 191–196; sequence IYGLSL. A helical transmembrane segment spans residues 205-226; the sequence is YYRGLSLNLMRIVPHFVITMTT.

This sequence belongs to the mitochondrial carrier (TC 2.A.29) family.

It is found in the host mitochondrion inner membrane. In terms of biological role, transports dATP and to a lesser extent dTTP, TTP, UTP and ADP, possibly across the mitochondrial inner membrane. This Acanthamoeba polyphaga (Amoeba) protein is Mitochondrial carrier-like protein L276.